Here is a 472-residue protein sequence, read N- to C-terminus: MVRRLARGCWSAFWDYETPKVIVVRNRRLGFVHRMVQLLILLYFVWYVFIVQKSYQDSETGPESSIITKVKGITMSEDKVWDVEEYVKPPEGGSVVSIITRIEVTPSQTLGTCPESMRVHSSTCHSDDDCIAGQLDMQGNGIRTGHCVPYYHGDSKTCEVSAWCPVEDGTSDNHFLGKMAPNFTILIKNSIHYPKFKFSKGNIASQKSDYLKHCTFDQDSDPYCPIFRLGFIVEKAGENFTELAHKGGVIGVIINWNCDLDLSESECNPKYSFRRLDPKYDPASSGYNFRFAKYYKINGTTTTRTLIKAYGIRIDVIVHGQAGKFSLIPTIINLATALTSIGVGSFLCDWILLTFMNKNKLYSHKKFDKVRTPKHPSSRWPVTLALVLGQIPPPPSHYSQDQPPSPPSGEGPTLGEGAELPLAVQSPRPCSISALTEQVVDTLGQHMGQRPPVPEPSQQDSTSTDPKGLAQL.

Residues 1–34 (MVRRLARGCWSAFWDYETPKVIVVRNRRLGFVHR) are Cytoplasmic-facing. Intrachain disulfides connect Cys-9-Cys-430, Cys-113-Cys-164, Cys-124-Cys-147, Cys-130-Cys-158, Cys-214-Cys-224, and Cys-258-Cys-267. The chain crosses the membrane as a helical span at residues 35-52 (MVQLLILLYFVWYVFIVQ). Over 53-326 (KSYQDSETGP…IVHGQAGKFS (274 aa)) the chain is Extracellular. The ATP site is built by Lys-69 and Lys-71. The N-linked (GlcNAc...) asparagine glycan is linked to Asn-182. Thr-184 is an ATP binding site. Residue Asn-239 is glycosylated (N-linked (GlcNAc...) asparagine). Residues Ser-284, Asn-288, and Arg-290 each coordinate ATP. A glycan (N-linked (GlcNAc...) asparagine) is linked at Asn-298. Lys-308 contacts ATP. Residues 309-322 (AYGIRIDVIVHGQA) form a pore-forming motif region. A helical transmembrane segment spans residues 327–347 (LIPTIINLATALTSIGVGSFL). Residues 348 to 472 (CDWILLTFMN…STDPKGLAQL (125 aa)) lie on the Cytoplasmic side of the membrane. The segment at 393–472 (PPPSHYSQDQ…STDPKGLAQL (80 aa)) is disordered. A compositionally biased stretch (polar residues) spans 456 to 465 (PSQQDSTSTD).

It belongs to the P2X receptor family. In terms of assembly, homotrimer and heterotrimer; functional P2XRs are organized as homomeric and heteromeric trimers. Homotrimer. Forms heterotrimer with P2RX1. Forms heterotrimer with P2RX6. Forms heterotrimer with P2RX3. High levels in pituitary and vas deferens. Lower extent in spinal cord, bladder, brain, adrenal, testis, sensory epithelia from the inner ear.

The protein resides in the cell membrane. The enzyme catalyses Ca(2+)(in) = Ca(2+)(out). It catalyses the reaction K(+)(in) = K(+)(out). The catalysed reaction is Na(+)(in) = Na(+)(out). With respect to regulation, fast activation by external ATP. Exhibits slow desensitization during prolonged ATP activation. Not sensitive to the ATP agonist:alpha/beta-methylene-ATP. ATP-gated nonselective transmembrane cation channel permeable to potassium, sodium and calcium. Activation by extracellular ATP induces a variety of cellular responses, such as excitatory postsynaptic responses in sensory neurons, neuromuscular junctions (NMJ) formation, hearing, perception of taste and peristalsis. In the inner ear, regulates sound transduction and auditory neurotransmission, outer hair cell electromotility, inner ear gap junctions, and K(+) recycling. Mediates synaptic transmission between neurons and from neurons to smooth muscle. This is P2X purinoceptor 2 (P2rx2) from Rattus norvegicus (Rat).